The chain runs to 276 residues: 5-deoxy-glucuronate isomerase (276 aa).

Belongs to the isomerase IolB family.

It carries out the reaction 5-deoxy-D-glucuronate = 5-dehydro-2-deoxy-D-gluconate. It functions in the pathway polyol metabolism; myo-inositol degradation into acetyl-CoA; acetyl-CoA from myo-inositol: step 4/7. Involved in the isomerization of 5-deoxy-glucuronate (5DG) to 5-dehydro-2-deoxy-D-gluconate (DKG or 2-deoxy-5-keto-D-gluconate). In Geobacillus kaustophilus (strain HTA426), this protein is 5-deoxy-glucuronate isomerase.